A 196-amino-acid polypeptide reads, in one-letter code: MTSEAMDTLGQYKITVWEEESFQGKRCEFLMECPSIMERGFRKIRSIKVESGPWVGFEYPEYQGQQFILEKGDYPRWEAWSGNSGYRTEHLLSFRPVKCANHNDSKAILYEAENFQGHKFELSDDYPSLQAMGWGNKEVASIKVNAGAWVAYQYPGYRGYQYVLERDRQNGEFKKYSEYSSQAHTNQIQSIRRIQH.

Residues 1–11 (MTSEAMDTLGQ) are N-terminal arm. 2 consecutive Beta/gamma crystallin 'Greek key' domains span residues 12–51 (YKIT…KVES) and 52–98 (GPWV…RPVK). The segment at 99–104 (CANHND) is connecting peptide. 2 Beta/gamma crystallin 'Greek key' domains span residues 105–146 (SKAI…KVNA) and 147–195 (GAWV…RRIQ).

This sequence belongs to the beta/gamma-crystallin family. As to quaternary structure, homo/heterodimer, or complexes of higher-order. The structure of beta-crystallin oligomers seems to be stabilized through interactions between the N-terminal arms.

In terms of biological role, crystallins are the dominant structural components of the vertebrate eye lens. This is Beta-crystallin A2 (CRYBA2) from Gallus gallus (Chicken).